The primary structure comprises 932 residues: Serine/threonine-protein kinase PknD (932 aa).

The Protein kinase domain occupies 4 to 291; it reads YDIVRIIGKG…ELKEDIESHL (288 aa). Residues 10-18 and Lys33 contribute to the ATP site; that span reads IGKGGMGEV. Asp138 (proton acceptor) is an active-site residue.

It belongs to the protein kinase superfamily. Ser/Thr protein kinase family. In terms of processing, autophosphorylated on serine and threonine residues.

The enzyme catalyses L-seryl-[protein] + ATP = O-phospho-L-seryl-[protein] + ADP + H(+). It carries out the reaction L-threonyl-[protein] + ATP = O-phospho-L-threonyl-[protein] + ADP + H(+). Its function is as follows. Together with the serine/threonine kinase Pkn1, may play a role in the specific interactions with host proteins during intracellular growth. This Chlamydia pneumoniae (Chlamydophila pneumoniae) protein is Serine/threonine-protein kinase PknD.